Here is a 294-residue protein sequence, read N- to C-terminus: Undecaprenyl-diphosphatase (294 aa).

6 consecutive transmembrane segments (helical) span residues 39 to 59 (PGAA…ILYF), 93 to 113 (ATLG…GFTL), 123 to 143 (NLWI…MVDA), 198 to 218 (SFLM…IKAV), 232 to 252 (PTLV…IGFL), and 268 to 288 (IGLA…AIDP).

This sequence belongs to the UppP family.

The protein resides in the cell membrane. The catalysed reaction is di-trans,octa-cis-undecaprenyl diphosphate + H2O = di-trans,octa-cis-undecaprenyl phosphate + phosphate + H(+). Catalyzes the dephosphorylation of undecaprenyl diphosphate (UPP). Confers resistance to bacitracin. The chain is Undecaprenyl-diphosphatase from Bifidobacterium longum (strain DJO10A).